The chain runs to 302 residues: Glycine--tRNA ligase alpha subunit (302 aa).

This sequence belongs to the class-II aminoacyl-tRNA synthetase family. As to quaternary structure, tetramer of two alpha and two beta subunits.

It is found in the cytoplasm. It carries out the reaction tRNA(Gly) + glycine + ATP = glycyl-tRNA(Gly) + AMP + diphosphate. This is Glycine--tRNA ligase alpha subunit from Xanthomonas oryzae pv. oryzae (strain PXO99A).